The following is a 753-amino-acid chain: 5-methyltetrahydropteroyltriglutamate--homocysteine methyltransferase (753 aa).

Residues Arg17–Lys20 and Lys117 contribute to the 5-methyltetrahydropteroyltri-L-glutamate site. L-homocysteine is bound by residues Ile431–Ser433 and Glu484. L-methionine contacts are provided by residues Ile431–Ser433 and Glu484. 5-methyltetrahydropteroyltri-L-glutamate is bound by residues Arg515–Cys516 and Trp561. Residue Asp599 coordinates L-homocysteine. An L-methionine-binding site is contributed by Asp599. Glu605 is a 5-methyltetrahydropteroyltri-L-glutamate binding site. Residues His641, Cys643, and Glu665 each contribute to the Zn(2+) site. The Proton donor role is filled by His694. Cys726 provides a ligand contact to Zn(2+).

This sequence belongs to the vitamin-B12 independent methionine synthase family. Requires Zn(2+) as cofactor.

The enzyme catalyses 5-methyltetrahydropteroyltri-L-glutamate + L-homocysteine = tetrahydropteroyltri-L-glutamate + L-methionine. It participates in amino-acid biosynthesis; L-methionine biosynthesis via de novo pathway; L-methionine from L-homocysteine (MetE route): step 1/1. In terms of biological role, catalyzes the transfer of a methyl group from 5-methyltetrahydrofolate to homocysteine resulting in methionine formation. The sequence is that of 5-methyltetrahydropteroyltriglutamate--homocysteine methyltransferase from Enterobacter sp. (strain 638).